We begin with the raw amino-acid sequence, 277 residues long: Raffinose operon transcriptional regulatory protein RafR (277 aa).

Positions 176 to 274 (NLAVSYLQEN…GASPSYYRKS (99 aa)) constitute an HTH araC/xylS-type domain. 2 consecutive DNA-binding regions (H-T-H motif) follow at residues 193–214 (MDLCHYLNLSRSYLYTLFKTHA) and 241–264 (VQSIANMVGYKDSFTFSKAFKRYS).

Its function is as follows. Involved in the regulation of the raffinose-operon. The protein is Raffinose operon transcriptional regulatory protein RafR (rafR) of Pediococcus pentosaceus.